The sequence spans 463 residues: Probable multidrug resistance protein YoeA (463 aa).

The next 12 membrane-spanning stretches (helical) occupy residues 24-44, 56-76, 106-126, 143-163, 177-197, 202-222, 256-276, 293-313, 330-350, 370-390, 397-417, and 427-447; these read LFLV…LVGM, VAAV…TIGI, FTFL…LDIL, ARIL…TTFL, IVST…MFGF, IYGS…VLMV, VPAS…ISFV, VASY…IFAA, VGIW…YVFS, LLMI…ISAT, VLWP…PVAF, and ILGV…LIYG.

Belongs to the multi antimicrobial extrusion (MATE) (TC 2.A.66.1) family.

It is found in the cell membrane. The sequence is that of Probable multidrug resistance protein YoeA (yoeA) from Bacillus subtilis (strain 168).